Consider the following 548-residue polypeptide: MAELIISASDIEGAIEDYVSSFTADSEREEIGTVIDAGDGIAHVEGLPSVMTQELLEFPGGVLGVALNLDEHSVGAVILGEFEKIEEGQQVKRTGEVLSVPVGDAFLGRVINPLGQPIDGQGDIESDTRRALELQAPSVVQRQGVSEPLQTGIKAIDSQTPIGRGQRQLIIGDRKTGKTAVAVDTILNQRKAWETGDPKQQVRCVYVAIGQKGTTIASVKRALEEGGAMEYTTIVAAPASDAAGFKWLAPYTGSAIGQHWMYDGKHVLIVFDDLSKQADAYRAISLLLRRPPGREAFPGDVFYLHSRLLERCAKLSDELGGGSMTGLPIIETKANDISAFIPTNVISITDGQCFLESDLFNQGVRPAINVGVSVSRVGGAAQIKAMKEVAGSLRLELSQYRELESFAAFASDLDAASKAQLDRGARLVELLKQPQYTPYSVEDQVVAIFLGTKGHLDSVPVEDVSRFEQEVLEHVKASHDDILQEIRETKKLSESTEEKLTNVINDFKKGFSASDGSSVVVNEADAEAMDEADVEKESVKVRKPAPKK.

172 to 179 (GDRKTGKT) is a binding site for ATP. Residues 526–548 (AEAMDEADVEKESVKVRKPAPKK) are disordered.

Belongs to the ATPase alpha/beta chains family. F-type ATPases have 2 components, CF(1) - the catalytic core - and CF(0) - the membrane proton channel. CF(1) has five subunits: alpha(3), beta(3), gamma(1), delta(1), epsilon(1). CF(0) has three main subunits: a(1), b(2) and c(9-12). The alpha and beta chains form an alternating ring which encloses part of the gamma chain. CF(1) is attached to CF(0) by a central stalk formed by the gamma and epsilon chains, while a peripheral stalk is formed by the delta and b chains.

It is found in the cell membrane. The enzyme catalyses ATP + H2O + 4 H(+)(in) = ADP + phosphate + 5 H(+)(out). Its function is as follows. Produces ATP from ADP in the presence of a proton gradient across the membrane. The alpha chain is a regulatory subunit. The chain is ATP synthase subunit alpha from Mycolicibacterium gilvum (strain PYR-GCK) (Mycobacterium gilvum (strain PYR-GCK)).